A 209-amino-acid polypeptide reads, in one-letter code: MSGPERITLAMTGASGAQYGLRLLDCLVQEEREVHFLISKAAQLVMATETDVALPAKPQAMQAFLTEYCGAAAGQIRVFGQNDWMAPPASGSSAPNAMVICPCSTGTLSAVATGACNNLIERAADVALKERRPLVLVPREAPFSSIHLENMLKLSNLGAVILPAAPGFYHQPQSVEDLVDFVVARILNTLGIPQDMLPRWGEQHLVSDE.

FMN-binding positions include 13–15 (GAS), Ser-39, 104–107 (STGT), Cys-116, and Arg-139. Positions 169 and 185 each coordinate dimethylallyl phosphate.

The protein belongs to the UbiX/PAD1 family.

It carries out the reaction dimethylallyl phosphate + FMNH2 = prenylated FMNH2 + phosphate. In terms of biological role, flavin prenyltransferase that catalyzes the synthesis of the prenylated FMN cofactor (prenyl-FMN) for 4-hydroxy-3-polyprenylbenzoic acid decarboxylase UbiD. The prenyltransferase is metal-independent and links a dimethylallyl moiety from dimethylallyl monophosphate (DMAP) to the flavin N5 and C6 atoms of FMN. This chain is Flavin prenyltransferase UbiX, found in Pseudomonas aeruginosa (strain ATCC 15692 / DSM 22644 / CIP 104116 / JCM 14847 / LMG 12228 / 1C / PRS 101 / PAO1).